Reading from the N-terminus, the 276-residue chain is MAAQFFNRIGQMGLGVAVLGGVVNSALYNVEGGHRAVIFDRFTGIKENVVGEGTHFFIPWVQRPIIFDIRSQPRNVPVITGSKDLQNVNITLRILYRPIPDQLPKIYTILGQDYDERVLPSIAPEVLKAVVAQFDAGELITQREMVSQRVSQELTVRAKQFGFILDDISLTHLTFGREFTLAVEMKQVAQQEAEKARFVVEKAEQQKLASIISAEGDAEAAGLLAKSFGEAGDGLVELRRIEAAEDIAYQLSRSRGVAYLPSGQSTLLNLPSTIAQ.

This sequence belongs to the prohibitin family.

Required for larval metabolism or for the progression of the larva into a pupa. The polypeptide is Prohibitin 1 (Drosophila melanogaster (Fruit fly)).